A 642-amino-acid polypeptide reads, in one-letter code: UvrABC system protein C (642 aa).

Residues 20 to 97 (ERCGVYRMFD…IKKFQPKFNI (78 aa)) enclose the GIY-YIG domain. Residues 207–242 (KELQENLSKKMEELSSQMRFEEAAEIRDRIKALSYV) enclose the UVR domain.

This sequence belongs to the UvrC family. As to quaternary structure, interacts with UvrB in an incision complex.

Its subcellular location is the cytoplasm. In terms of biological role, the UvrABC repair system catalyzes the recognition and processing of DNA lesions. UvrC both incises the 5' and 3' sides of the lesion. The N-terminal half is responsible for the 3' incision and the C-terminal half is responsible for the 5' incision. The polypeptide is UvrABC system protein C (Rickettsia felis (strain ATCC VR-1525 / URRWXCal2) (Rickettsia azadi)).